Here is a 145-residue protein sequence, read N- to C-terminus: Basic phospholipase A2 beta-bungarotoxin A-AL1 chain (145 aa).

The first 17 residues, 1-17 (MLIFLWCGAVCVSLLGA), serve as a signal peptide directing secretion. The propeptide occupies 18-25 (ANIPPHPL). Cystine bridges form between Cys-52–Cys-144, Cys-54–Cys-70, Cys-76–Cys-118, Cys-86–Cys-111, and Cys-104–Cys-116. 3 residues coordinate Ca(2+): Tyr-53, Gly-55, and Gly-57. His-73 is an active-site residue. The active site involves Asp-119.

This sequence belongs to the phospholipase A2 family. Group I subfamily. G49 sub-subfamily. In terms of assembly, heterodimer; disulfide-linked. The A chains have phospholipase A2 activity and the B chains show homology with the basic protease inhibitors. Requires Ca(2+) as cofactor. Post-translationally, this enzyme lacks one of the seven disulfide bonds found in similar PLA2 proteins. In terms of tissue distribution, expressed by the venom gland.

The protein resides in the secreted. The catalysed reaction is a 1,2-diacyl-sn-glycero-3-phosphocholine + H2O = a 1-acyl-sn-glycero-3-phosphocholine + a fatty acid + H(+). Snake venom phospholipase A2 (PLA2) that inhibits neuromuscular transmission by blocking acetylcholine release from the nerve termini. PLA2 catalyzes the calcium-dependent hydrolysis of the 2-acyl groups in 3-sn-phosphoglycerides. The sequence is that of Basic phospholipase A2 beta-bungarotoxin A-AL1 chain from Bungarus multicinctus (Many-banded krait).